Here is a 304-residue protein sequence, read N- to C-terminus: Glycine--tRNA ligase alpha subunit (304 aa).

It belongs to the class-II aminoacyl-tRNA synthetase family. Tetramer of two alpha and two beta subunits.

Its subcellular location is the cytoplasm. It carries out the reaction tRNA(Gly) + glycine + ATP = glycyl-tRNA(Gly) + AMP + diphosphate. This chain is Glycine--tRNA ligase alpha subunit, found in Afipia carboxidovorans (strain ATCC 49405 / DSM 1227 / KCTC 32145 / OM5) (Oligotropha carboxidovorans).